The following is a 265-amino-acid chain: uncharacterized protein (265 aa).

CBS domains follow at residues 9–64 (MTKK…EKVE) and 67–126 (MTKR…TTPK).

This is an uncharacterized protein from Methanocaldococcus jannaschii (strain ATCC 43067 / DSM 2661 / JAL-1 / JCM 10045 / NBRC 100440) (Methanococcus jannaschii).